Reading from the N-terminus, the 300-residue chain is Epimerase family protein SAB0724c (300 aa).

The protein belongs to the NAD(P)-dependent epimerase/dehydratase family. SDR39U1 subfamily.

This is Epimerase family protein SAB0724c from Staphylococcus aureus (strain bovine RF122 / ET3-1).